Reading from the N-terminus, the 237-residue chain is Uridylate kinase (237 aa).

12-15 serves as a coordination point for ATP; it reads KLSG. Position 53 (G53) interacts with UMP. Residues G54 and R58 each contribute to the ATP site. UMP is bound by residues D73 and 134-141; that span reads TGNPYFTT. Residues T161, Y167, and D170 each coordinate ATP.

This sequence belongs to the UMP kinase family. As to quaternary structure, homohexamer.

It localises to the cytoplasm. It catalyses the reaction UMP + ATP = UDP + ADP. It participates in pyrimidine metabolism; CTP biosynthesis via de novo pathway; UDP from UMP (UMPK route): step 1/1. Inhibited by UTP. Catalyzes the reversible phosphorylation of UMP to UDP. The sequence is that of Uridylate kinase from Rhizorhabdus wittichii (strain DSM 6014 / CCUG 31198 / JCM 15750 / NBRC 105917 / EY 4224 / RW1) (Sphingomonas wittichii).